The sequence spans 547 residues: Chaperonin GroEL (547 aa).

ATP is bound by residues 30–33, Lys51, 87–91, Gly415, 479–481, and Asp495; these read TLGP, DGTTT, and DAA.

It belongs to the chaperonin (HSP60) family. Forms a cylinder of 14 subunits composed of two heptameric rings stacked back-to-back. Interacts with the co-chaperonin GroES.

The protein localises to the cytoplasm. It carries out the reaction ATP + H2O + a folded polypeptide = ADP + phosphate + an unfolded polypeptide.. Its function is as follows. Together with its co-chaperonin GroES, plays an essential role in assisting protein folding. The GroEL-GroES system forms a nano-cage that allows encapsulation of the non-native substrate proteins and provides a physical environment optimized to promote and accelerate protein folding. The chain is Chaperonin GroEL from Dichelobacter nodosus (strain VCS1703A).